Here is a 741-residue protein sequence, read N- to C-terminus: MASSSSLTLSQVIFSPSLPRHGSSSSSSPSLSFSTFSGLKSTPFTSSHRRILPSTTVTKQQFSVRASAAVETLEKTDAAIVEKSVNTIRFLAIDAVEKANSGHPGLPMGCAPMGHILYDEVMKYNPKNPYWFNRDRFVLSAGHGCMLQYALLHLAGYDSVQEDDLKSFRQWGSRIPGHPENFETPGVEVTTGPLGQGIANAVGLAVAEKHLAARFNKPDAEIVDHYTYVILGDGCQMEGISNEVCSLAGHWGLGKLIAFYDDNHISIDGDTEIAFTEDVSARFESLGWHVIWVKNGNTGYDEIRAAIKEAKAVKDKPTMIKVTTTIGFGSPNKANSYSVHGSGLGAKEVEATRNNLGWPYEPFHVPEDVKSHWSRHTPEGAALETEWNAKFAEYEKKYAEEAADLKSIITGELPAGWEKALPTYTPESPADATRNLSQQNLNALAKVLPGFLGGSADLASSNMTLLKMFGDFQKNTPEERNLRFGVREHGMGAICNGIALHSLGLIPYCATFFVFTDYMRGAMRISALSEAGVIYVMTHDSIGLGEDGPTHQPIEHLASFRAMPNILMFRPADGNETAGAYKVAVLKRKTPSILALSRQKLPQLAGTSIEGAAKGGYIVSDNSSGNKPDVILIGTGSELEIAVKAAEELKKEGKTVRVVSFVCWELYDEQSAEYKESVLPSSVTARVSIEAGSTFGWQKFVGDKGKAIGIDGFGASAPADKIYKEFGITAEAVVAAAKQVS.

A chloroplast-targeting transit peptide spans 1 to 67 (MASSSSLTLS…TKQQFSVRAS (67 aa)). His-103 is a binding site for substrate. Thiamine diphosphate-binding positions include His-143 and 192 to 194 (GPL). Asp-233 lines the Mg(2+) pocket. Residues Gly-234 and Asn-263 each coordinate thiamine diphosphate. Mg(2+) contacts are provided by Asn-263 and Ile-265. Residues His-340, Arg-434, and Ser-461 each coordinate substrate. Thiamine diphosphate is bound at residue His-340. Positions 488 and 515 each coordinate thiamine diphosphate. Glu-488 functions as the Proton donor in the catalytic mechanism. Substrate is bound by residues His-539, Asp-547, and Arg-598.

Belongs to the transketolase family. In terms of assembly, homodimer. The cofactor is Mg(2+). Ca(2+) is required as a cofactor. Requires Mn(2+) as cofactor. It depends on Co(2+) as a cofactor. Thiamine diphosphate serves as cofactor.

The protein resides in the plastid. It is found in the chloroplast thylakoid membrane. The catalysed reaction is D-sedoheptulose 7-phosphate + D-glyceraldehyde 3-phosphate = aldehydo-D-ribose 5-phosphate + D-xylulose 5-phosphate. It participates in carbohydrate biosynthesis; Calvin cycle. Its function is as follows. Catalyzes the reversible transfer of a two-carbon ketol group from fructose-6-phosphate or sedoheptulose-7-phosphate to glyceraldehyde-3-phosphate to yield xylulose-5-phosphate and erythrose-4-phosphate or ribose-5-phosphate, respectively. This chain is Transketolase, chloroplastic, found in Solanum tuberosum (Potato).